The following is a 287-amino-acid chain: MTQLSAAQKPSDSSKALYGGKGTRRITIRDITTAKERGEKWPMLTAYDAMTASVFDEAGIPVMLVGDSAGNCHLGYETTVPVTLDEMTMLSAAVVRGTSRALIVGDLPFGSYQEGPVQALRSATRLVKEAGVGAVKLEGGERSHRQIELLVESGIPVMAHIGLTPQSVNAMGYRVQGRGEEAAQQLLRDAKAVQDAGAFAVVLELVPAELAAEVTRVLHIPTVGIGAGPETDAQVLVWTDMLGLTGGKVPKFVKKYADLREVMGNAAKAFAEDVVGGTFPLEEHSVH.

The Mg(2+) site is built by D67 and D106. 3-methyl-2-oxobutanoate is bound by residues 67-68 (DS), D106, and K136. E138 lines the Mg(2+) pocket. Residue E204 is the Proton acceptor of the active site.

It belongs to the PanB family. As to quaternary structure, homodecamer; pentamer of dimers. Mg(2+) is required as a cofactor.

The protein resides in the cytoplasm. It carries out the reaction 3-methyl-2-oxobutanoate + (6R)-5,10-methylene-5,6,7,8-tetrahydrofolate + H2O = 2-dehydropantoate + (6S)-5,6,7,8-tetrahydrofolate. Its pathway is cofactor biosynthesis; (R)-pantothenate biosynthesis; (R)-pantoate from 3-methyl-2-oxobutanoate: step 1/2. Catalyzes the reversible reaction in which hydroxymethyl group from 5,10-methylenetetrahydrofolate is transferred onto alpha-ketoisovalerate to form ketopantoate. This Streptomyces avermitilis (strain ATCC 31267 / DSM 46492 / JCM 5070 / NBRC 14893 / NCIMB 12804 / NRRL 8165 / MA-4680) protein is 3-methyl-2-oxobutanoate hydroxymethyltransferase.